Consider the following 249-residue polypeptide: 5'-nucleotidase SurE (249 aa).

A divalent metal cation is bound by residues Asp-8, Asp-9, Ser-39, and Asn-91.

Belongs to the SurE nucleotidase family. A divalent metal cation is required as a cofactor.

The protein resides in the cytoplasm. The catalysed reaction is a ribonucleoside 5'-phosphate + H2O = a ribonucleoside + phosphate. Its function is as follows. Nucleotidase that shows phosphatase activity on nucleoside 5'-monophosphates. This chain is 5'-nucleotidase SurE, found in Azotobacter vinelandii (strain DJ / ATCC BAA-1303).